Reading from the N-terminus, the 670-residue chain is Segment polarity protein dishevelled homolog DVL-1 (670 aa).

The region spanning 1–85 (MAETKIIYHM…RVVSWLVLAE (85 aa)) is the DIX domain. A disordered region spans residues 89 to 237 (SDAGSQGTDS…LRQADRASSF (149 aa)). Residues 142 to 151 (SHRRERARRR) are compositionally biased toward basic residues. Basic and acidic residues predominate over residues 152 to 171 (NREEAARTNGHPRGDRRRDV). Low complexity predominate over residues 176–192 (DSASTALSSELESSSFV). Phosphoserine is present on Ser194. A compositionally biased stretch (low complexity) spans 200–214 (TSRLSSSTEQSTSSR). Residues 215-228 (LIRKHKRRRRKQRL) show a composition bias toward basic residues. Positions 251–323 (TVTLNMERHH…NDDAVRVLRE (73 aa)) constitute a PDZ domain. The region spanning 400-474 (PDSGLEIRDR…SEQCYYVFGD (75 aa)) is the DEP domain. Residues 518–642 (PGPPPCFPPA…PGGPPVRELA (125 aa)) are disordered. The segment covering 526 to 555 (PAYQDPGFSYGSGSTGSQQSEGSKSSGSTR) has biased composition (low complexity). Positions 600-611 (SRGSSPRSQASA) are enriched in polar residues.

The protein belongs to the DSH family. As to quaternary structure, interacts with CXXC4. Interacts (via PDZ domain) with NXN. Interacts with BRD7 and INVS. Interacts (via PDZ domain) with VANGL1 and VANGL2 (via C-terminus). Interacts with ARRB1; the interaction is enhanced by phosphorylation of DVL1. Interacts with CYLD. Interacts (via PDZ domain) with RYK. Self-associates (via DIX domain) and forms higher homooligomers. Interacts (via PDZ domain) with DACT1 and FZD7, where DACT1 and FZD7 compete for the same binding site. Interacts (via DEP domain) with MUSK; the interaction is direct and mediates the formation a DVL1, MUSK and PAK1 ternary complex involved in AChR clustering. Interacts (via PDZ domain) with TMEM88. Interacts with DCDC2. Interacts with FOXK2. Interacts with PKD1 (via extracellular domain). Interacts (via PDZ domain) with CCDC88C/DAPLE; competes with CCDC88C for binding to frizzled receptor FZD7 and dissociates from CCDC88C following initiation of non-canonical Wnt signaling when CCDC88C displaces DVL1 from ligand-activated FZD7. Ubiquitinated; undergoes both 'Lys-48'-linked ubiquitination, leading to its subsequent degradation by the ubiquitin-proteasome pathway, and 'Lys-63'-linked ubiquitination. The interaction with INVS is required for ubiquitination. Deubiquitinated by CYLD, which acts on 'Lys-63'-linked ubiquitin chains.

It localises to the cell membrane. It is found in the cytoplasm. Its subcellular location is the cytosol. The protein localises to the cytoplasmic vesicle. Functionally, participates in Wnt signaling by binding to the cytoplasmic C-terminus of frizzled family members and transducing the Wnt signal to down-stream effectors. Plays a role both in canonical and non-canonical Wnt signaling. Plays a role in the signal transduction pathways mediated by multiple Wnt genes. Required for LEF1 activation upon WNT1 and WNT3A signaling. DVL1 and PAK1 form a ternary complex with MUSK which is important for MUSK-dependent regulation of AChR clustering during the formation of the neuromuscular junction (NMJ). The protein is Segment polarity protein dishevelled homolog DVL-1 (DVL1) of Pan troglodytes (Chimpanzee).